A 217-amino-acid polypeptide reads, in one-letter code: RING-H2 finger protein ATL40 (217 aa).

Residues 28–48 (IFLVTTVSFSIIIIIVFVYYL) traverse the membrane as a helical segment. The segment at 100 to 142 (CAVCLSLLEEKDNARMLPNCKHVFHVSCVDTWLTTQSTCPVCR) adopts an RING-type; atypical zinc-finger fold. Basic and acidic residues-rich tracts occupy residues 143–160 (TEAEPSHPRLEPEPREGP) and 186–217 (DSFRRILTRERSSNRRDHSRVDQDRELDIERQ). Residues 143–217 (TEAEPSHPRL…QDRELDIERQ (75 aa)) are disordered.

It belongs to the RING-type zinc finger family. ATL subfamily.

The protein resides in the membrane. It catalyses the reaction S-ubiquitinyl-[E2 ubiquitin-conjugating enzyme]-L-cysteine + [acceptor protein]-L-lysine = [E2 ubiquitin-conjugating enzyme]-L-cysteine + N(6)-ubiquitinyl-[acceptor protein]-L-lysine.. It functions in the pathway protein modification; protein ubiquitination. This is RING-H2 finger protein ATL40 (ATL40) from Arabidopsis thaliana (Mouse-ear cress).